Consider the following 211-residue polypeptide: Uracil phosphoribosyltransferase (211 aa).

5-phospho-alpha-D-ribose 1-diphosphate is bound by residues R79, R104, and 131-139 (DPMLATGGS). Uracil is bound by residues I196 and 201 to 203 (GDA). 5-phospho-alpha-D-ribose 1-diphosphate is bound at residue D202.

It belongs to the UPRTase family. Mg(2+) serves as cofactor.

The enzyme catalyses UMP + diphosphate = 5-phospho-alpha-D-ribose 1-diphosphate + uracil. Its pathway is pyrimidine metabolism; UMP biosynthesis via salvage pathway; UMP from uracil: step 1/1. Allosterically activated by GTP. In terms of biological role, catalyzes the conversion of uracil and 5-phospho-alpha-D-ribose 1-diphosphate (PRPP) to UMP and diphosphate. In Lactococcus lactis subsp. lactis (strain IL1403) (Streptococcus lactis), this protein is Uracil phosphoribosyltransferase.